The primary structure comprises 580 residues: CDKN2A-interacting protein (580 aa).

Ala2 bears the N-acetylalanine mark. One can recognise an XRN2-binding (XTBD) domain in the interval 19–133 (VEALRCDGET…KVKKRGISSS (115 aa)). The disordered stretch occupies residues 129–356 (GISSSNEGVE…PKSSSSTNTS (228 aa)). Ser131 is subject to Phosphoserine. The segment covering 155–167 (EQDHAKTSAKTER) has biased composition (basic and acidic residues). Residues 168-179 (ASAQQENSSTCI) are compositionally biased toward polar residues. Residue Lys184 forms a Glycyl lysine isopeptide (Lys-Gly) (interchain with G-Cter in SUMO1) linkage. The span at 185-228 (SESGNSARSSGISSQNSSTSDGDRSVSSQSSSSVSSQVTTAGSG) shows a compositional bias: low complexity. Residues 231-240 (SEAEAPDKHG) show a composition bias toward basic and acidic residues. Phosphoserine is present on Ser241. The segment covering 248 to 269 (LKSSVNSHMTQSTDSRQQSGSP) has biased composition (polar residues). Composition is skewed to low complexity over residues 274-313 (LEGS…PSSE) and 321-356 (SKTS…TNTS). Thr346 bears the Phosphothreonine mark. Ser389 carries the post-translational modification Phosphoserine. The DRBM domain maps to 462–537 (NHGELLNAAI…SREALKLFLK (76 aa)).

It belongs to the CARF family. Interacts with CDKN2A/p14ARF, p53/TP53 and MDM2. Interacts with CHEK2 and MAPK3. Interacts with XRN2. In terms of processing, may be ubiquitinated. As to expression, ubiquitously expressed.

The protein localises to the nucleus. It is found in the nucleoplasm. In terms of biological role, regulates DNA damage response in a dose-dependent manner through a number of signaling pathways involved in cell proliferation, apoptosis and senescence. In Homo sapiens (Human), this protein is CDKN2A-interacting protein (CDKN2AIP).